Here is a 198-residue protein sequence, read N- to C-terminus: Thymidine kinase (198 aa).

ATP-binding positions include glycine 9–serine 16 and aspartate 85–glutamine 88. Glutamate 86 functions as the Proton acceptor in the catalytic mechanism. Residues cysteine 143, cysteine 146, cysteine 180, and histidine 183 each contribute to the Zn(2+) site.

The protein belongs to the thymidine kinase family. As to quaternary structure, homotetramer.

Its subcellular location is the cytoplasm. The catalysed reaction is thymidine + ATP = dTMP + ADP + H(+). The sequence is that of Thymidine kinase from Streptococcus thermophilus (strain ATCC BAA-250 / LMG 18311).